The chain runs to 130 residues: Small ribosomal subunit protein uS8 (130 aa).

The protein belongs to the universal ribosomal protein uS8 family. Part of the 30S ribosomal subunit. Contacts proteins S5 and S12.

One of the primary rRNA binding proteins, it binds directly to 16S rRNA central domain where it helps coordinate assembly of the platform of the 30S subunit. This is Small ribosomal subunit protein uS8 from Actinobacillus pleuropneumoniae serotype 5b (strain L20).